Reading from the N-terminus, the 128-residue chain is Large ribosomal subunit protein bL17 (128 aa).

This sequence belongs to the bacterial ribosomal protein bL17 family. As to quaternary structure, part of the 50S ribosomal subunit. Contacts protein L32.

In Pseudomonas savastanoi pv. phaseolicola (strain 1448A / Race 6) (Pseudomonas syringae pv. phaseolicola (strain 1448A / Race 6)), this protein is Large ribosomal subunit protein bL17.